A 769-amino-acid polypeptide reads, in one-letter code: Endonuclease MutS2 (769 aa).

Residue 335–342 (GGNAGGKT) coordinates ATP. The Smr domain maps to 694 to 769 (IDLRGKRADV…GDGMTEVELV (76 aa)).

It belongs to the DNA mismatch repair MutS family. MutS2 subfamily. In terms of assembly, homodimer. Binds to stalled ribosomes, contacting rRNA.

Endonuclease that is involved in the suppression of homologous recombination and thus may have a key role in the control of bacterial genetic diversity. In terms of biological role, acts as a ribosome collision sensor, splitting the ribosome into its 2 subunits. Detects stalled/collided 70S ribosomes which it binds and splits by an ATP-hydrolysis driven conformational change. Acts upstream of the ribosome quality control system (RQC), a ribosome-associated complex that mediates the extraction of incompletely synthesized nascent chains from stalled ribosomes and their subsequent degradation. Probably generates substrates for RQC. The polypeptide is Endonuclease MutS2 (Maridesulfovibrio salexigens (strain ATCC 14822 / DSM 2638 / NCIMB 8403 / VKM B-1763) (Desulfovibrio salexigens)).